The sequence spans 164 residues: Telomerase-associated protein of 19 kDa (164 aa).

In terms of assembly, component of the telomerase holoenzyme complex, composed of the catalytic core (the catalytic subunit TERT, the telomerase RNA template component TER and TAP65/p65), which is associated with two heterotrimeric subcomplexes: (i) the replication protein A (RPA)-related subcomplex, composed of TEB1, RPA2/TEB2 and RPA3/TEB3 and (ii) the CST-like subcomplex, composed of TAP75/p75, TAP45/p45 and TAP19/p19. TEB1 and the CST-like subcomplex are tethered to the catalytic core by TAP50/p50.

The protein localises to the chromosome. The protein resides in the telomere. Component of a CST-like subcomplex of the holoenzyme telomerase ribonucleoprotein complex, which stimulates telomerase complementary-strand synthesis. Telomerase is an essential ribonucleoprotein enzyme that copies new telomeric repeats onto chromosome ends by repetitively synthesizing the short telomere-repeat sequence 5'-TTGGGG-3' using an RNA template component TER. The CST-like subcomplex (also named 7-4-1) binds telomeric single-stranded DNA and coordinates telomere G-strand and C-strand synthesis. The protein is Telomerase-associated protein of 19 kDa of Tetrahymena thermophila (strain SB210).